The following is a 354-amino-acid chain: MSVSDARLAQIAARFAELEARLASGTLEGADFIAASRDYAELEPVARVAEEVREMRGELVSLAALDDPDMRELADEELARIRAELPEAEHRLAVAMLPRDSADARPAMLEIRAGTGGDEAALFAADLFRMYERYAAEQGWRVETISVNANDLGGYKEVVANVAGQGVFAKLKFESGVHRVQRVPVTESGGRIHTSAATVAVLPEPDEVDVAIEDKDLKIDIYRASGAGGQHVNTTDSAVRITHLPSGLVVTCQDERSQHKNKAKAMQVLRTRLYDMRREAAQGAEAEARKAMVGSGDRSERIRTYNFPQGRVTDHRINLTLHRLPEILEGPGLAELIDALIAEDQSKRLAAMDG.

Glutamine 230 carries the N5-methylglutamine modification.

It belongs to the prokaryotic/mitochondrial release factor family. In terms of processing, methylated by PrmC. Methylation increases the termination efficiency of RF1.

It localises to the cytoplasm. In terms of biological role, peptide chain release factor 1 directs the termination of translation in response to the peptide chain termination codons UAG and UAA. The polypeptide is Peptide chain release factor 1 (Novosphingobium aromaticivorans (strain ATCC 700278 / DSM 12444 / CCUG 56034 / CIP 105152 / NBRC 16084 / F199)).